A 493-amino-acid polypeptide reads, in one-letter code: ATP synthase subunit beta (493 aa).

Residue 169-176 coordinates ATP; sequence GGAGVGKT.

It belongs to the ATPase alpha/beta chains family. F-type ATPases have 2 components, CF(1) - the catalytic core - and CF(0) - the membrane proton channel. CF(1) has five subunits: alpha(3), beta(3), gamma(1), delta(1), epsilon(1). CF(0) has three main subunits: a(1), b(2) and c(9-12). The alpha and beta chains form an alternating ring which encloses part of the gamma chain. CF(1) is attached to CF(0) by a central stalk formed by the gamma and epsilon chains, while a peripheral stalk is formed by the delta and b chains.

It is found in the cell inner membrane. The enzyme catalyses ATP + H2O + 4 H(+)(in) = ADP + phosphate + 5 H(+)(out). Functionally, produces ATP from ADP in the presence of a proton gradient across the membrane. The catalytic sites are hosted primarily by the beta subunits. This is ATP synthase subunit beta from Gluconacetobacter diazotrophicus (strain ATCC 49037 / DSM 5601 / CCUG 37298 / CIP 103539 / LMG 7603 / PAl5).